The chain runs to 487 residues: Betaine aldehyde dehydrogenase (487 aa).

Residues Ser26, Ile27, and Asp93 each coordinate K(+). Gly150–Trp152 lines the NAD(+) pocket. Lys162 serves as the catalytic Charge relay system. NAD(+) is bound by residues Lys176–Glu179 and Ser229–Thr232. Leu244 lines the K(+) pocket. The Proton acceptor role is filled by Glu250. Residues Gly252, Cys284, and Glu384 each coordinate NAD(+). Catalysis depends on Cys284, which acts as the Nucleophile. Residue Cys284 is modified to Cysteine sulfenic acid (-SOH). The K(+) site is built by Lys454 and Gly457. The active-site Charge relay system is the Glu461.

It belongs to the aldehyde dehydrogenase family. As to quaternary structure, dimer of dimers. It depends on K(+) as a cofactor.

It carries out the reaction betaine aldehyde + NAD(+) + H2O = glycine betaine + NADH + 2 H(+). It participates in amine and polyamine biosynthesis; betaine biosynthesis via choline pathway; betaine from betaine aldehyde: step 1/1. Involved in the biosynthesis of the osmoprotectant glycine betaine. Catalyzes the irreversible oxidation of betaine aldehyde to the corresponding acid. This chain is Betaine aldehyde dehydrogenase, found in Sinorhizobium fredii (strain NBRC 101917 / NGR234).